The following is a 186-amino-acid chain: Putative CTD phosphatase-like protein 355R (186 aa).

Residues 2 to 182 (ENNKKKLILL…TELLKVQKTL (181 aa)) enclose the FCP1 homology domain.

It belongs to the IIV-6 355R family.

In terms of biological role, may function as a phosphatase. The protein is Putative CTD phosphatase-like protein 355R of Aedes vexans (Inland floodwater mosquito).